The sequence spans 139 residues: Phosphoribosyl-AMP cyclohydrolase (139 aa).

Mg(2+) is bound at residue aspartate 91. Position 92 (cysteine 92) interacts with Zn(2+). Residues aspartate 93 and aspartate 95 each coordinate Mg(2+). Zn(2+)-binding residues include cysteine 110 and cysteine 117.

Belongs to the PRA-CH family. As to quaternary structure, homodimer. The cofactor is Mg(2+). Zn(2+) serves as cofactor.

It localises to the cytoplasm. The catalysed reaction is 1-(5-phospho-beta-D-ribosyl)-5'-AMP + H2O = 1-(5-phospho-beta-D-ribosyl)-5-[(5-phospho-beta-D-ribosylamino)methylideneamino]imidazole-4-carboxamide. It functions in the pathway amino-acid biosynthesis; L-histidine biosynthesis; L-histidine from 5-phospho-alpha-D-ribose 1-diphosphate: step 3/9. In terms of biological role, catalyzes the hydrolysis of the adenine ring of phosphoribosyl-AMP. The chain is Phosphoribosyl-AMP cyclohydrolase from Brucella abortus (strain S19).